The primary structure comprises 385 residues: Putative mitochondrial carrier protein TRV_02148.2 (385 aa).

2 Solcar repeats span residues 24 to 124 (SNTL…LHAR) and 130 to 210 (RTAG…LRRR). Helical transmembrane passes span 30–47 (GTAI…DSIL), 132–150 (AGNE…KLFT), 184–207 (WSAY…YLAL), 263–279 (YTIC…LEVI), and 294–310 (VVTV…LYML).

Belongs to the mitochondrial carrier (TC 2.A.29) family.

The protein resides in the mitochondrion inner membrane. May function as a mitochondrial transporter. This is Putative mitochondrial carrier protein TRV_02148.2 from Trichophyton verrucosum (strain HKI 0517).